A 317-amino-acid polypeptide reads, in one-letter code: Protease HtpX homolog (317 aa).

The next 2 helical transmembrane spans lie at 14-34 (LMGI…LYYI) and 41-61 (IALL…QWLF). Residue His-146 coordinates Zn(2+). Glu-147 is a catalytic residue. His-150 is a binding site for Zn(2+). Helical transmembrane passes span 158–178 (MLLA…TLLF) and 189–209 (IVLL…LILA). Glu-215 provides a ligand contact to Zn(2+).

This sequence belongs to the peptidase M48B family. The cofactor is Zn(2+).

It localises to the cell membrane. The chain is Protease HtpX homolog from Thermoplasma acidophilum (strain ATCC 25905 / DSM 1728 / JCM 9062 / NBRC 15155 / AMRC-C165).